Here is a 300-residue protein sequence, read N- to C-terminus: Putative heme-binding peroxidase (300 aa).

His39 functions as the Proton acceptor in the catalytic mechanism. Disordered stretches follow at residues 44–64 (YDKS…EAEG) and 116–135 (GRTD…LPDA). A compositionally biased stretch (basic and acidic residues) spans 116–126 (GRTDFADDSRV). His163 contacts heme b. Trp179 serves as the catalytic Tryptophan radical intermediate.

Belongs to the peroxidase family. Cytochrome c peroxidase subfamily. Heme b is required as a cofactor.

In terms of biological role, destroys radicals which are normally produced within the cells and which are toxic to biological systems. The polypeptide is Putative heme-binding peroxidase (Pyricularia oryzae (strain 70-15 / ATCC MYA-4617 / FGSC 8958) (Rice blast fungus)).